A 310-amino-acid chain; its full sequence is tRNA pseudouridine synthase B (310 aa).

Asp49 acts as the Nucleophile in catalysis.

Belongs to the pseudouridine synthase TruB family. Type 1 subfamily.

The enzyme catalyses uridine(55) in tRNA = pseudouridine(55) in tRNA. In terms of biological role, responsible for synthesis of pseudouridine from uracil-55 in the psi GC loop of transfer RNAs. The polypeptide is tRNA pseudouridine synthase B (Rhizobium johnstonii (strain DSM 114642 / LMG 32736 / 3841) (Rhizobium leguminosarum bv. viciae)).